A 101-amino-acid polypeptide reads, in one-letter code: Urease subunit beta 1 (101 aa).

Belongs to the urease beta subunit family. In terms of assembly, heterotrimer of UreA (gamma), UreB (beta) and UreC (alpha) subunits. Three heterotrimers associate to form the active enzyme.

The protein resides in the cytoplasm. It catalyses the reaction urea + 2 H2O + H(+) = hydrogencarbonate + 2 NH4(+). It functions in the pathway nitrogen metabolism; urea degradation; CO(2) and NH(3) from urea (urease route): step 1/1. Its function is as follows. Disruption of the ure1 gene cluster suggests that it protects brucellae during their passage through the stomach. The major route of infection in human brucellosis is oral. The protein is Urease subunit beta 1 of Brucella abortus (strain 2308).